The chain runs to 88 residues: UPF0298 protein BC_3932 (88 aa).

This sequence belongs to the UPF0298 family.

It localises to the cytoplasm. In Bacillus cereus (strain ATCC 14579 / DSM 31 / CCUG 7414 / JCM 2152 / NBRC 15305 / NCIMB 9373 / NCTC 2599 / NRRL B-3711), this protein is UPF0298 protein BC_3932.